The following is a 253-amino-acid chain: Chemotaxis protein PomA (253 aa).

A run of 4 helical transmembrane segments spans residues 6 to 26 (LLGLIGGFAFVIMAMVLGGSI), 28 to 48 (MFVDVTSILIVVGGSIFVVLM), 146 to 166 (FGDVAPAMGMIGTLVGLVAML), and 180 to 200 (AVALLTTLYGAILSNMVFFPI). Residues 201-253 (ADKLSLRRDQETLNRRLIMDGVLAIQDGQNPRVIDSYLKNYLNEGKRALEIDE) lie on the Cytoplasmic side of the membrane.

This sequence belongs to the MotA family. As to quaternary structure, each stator complex is composed of 4 PomA and 2 PomB subunits. 2 A subunits and 1 B subunit are thought to form a single ion channel, so that each stator complex contains two channels.

The protein localises to the cell inner membrane. PomA and PomB comprise the stator element of the flagellar motor complex. Required for rotation of the flagellar motor. Probable transmembrane proton channel. This is Chemotaxis protein PomA (pomA) from Vibrio alginolyticus.